The sequence spans 516 residues: Probable D,D-dipeptide-binding periplasmic protein DdpA (516 aa).

The first 25 residues, 1–25, serve as a signal peptide directing secretion; it reads MKRSISFRPTLLALVLATNFPVAHA.

The protein belongs to the bacterial solute-binding protein 5 family. The complex is composed of two ATP-binding proteins (DdpD and DdpF), two transmembrane proteins (DdpB and DdpC) and a solute-binding protein (DdpA).

It is found in the periplasm. In terms of biological role, part of the ABC transporter complex DdpABCDF, which is probably involved in D,D-dipeptide transport. In Escherichia coli (strain K12), this protein is Probable D,D-dipeptide-binding periplasmic protein DdpA (ddpA).